Reading from the N-terminus, the 776-residue chain is DNA ligase (776 aa).

Residues 31–35 (DAEYD), 80–81 (SL), and glutamate 112 contribute to the NAD(+) site. Lysine 114 serves as the catalytic N6-AMP-lysine intermediate. Arginine 135, glutamate 172, lysine 288, and lysine 312 together coordinate NAD(+). Cysteine 406, cysteine 409, cysteine 436, and cysteine 442 together coordinate Zn(2+). One can recognise a BRCT domain in the interval 693–776 (AEGLPLAGQT…TFLAEQGIAV (84 aa)).

Belongs to the NAD-dependent DNA ligase family. LigA subfamily. Requires Mg(2+) as cofactor. Mn(2+) is required as a cofactor.

The enzyme catalyses NAD(+) + (deoxyribonucleotide)n-3'-hydroxyl + 5'-phospho-(deoxyribonucleotide)m = (deoxyribonucleotide)n+m + AMP + beta-nicotinamide D-nucleotide.. Its function is as follows. DNA ligase that catalyzes the formation of phosphodiester linkages between 5'-phosphoryl and 3'-hydroxyl groups in double-stranded DNA using NAD as a coenzyme and as the energy source for the reaction. It is essential for DNA replication and repair of damaged DNA. In Pseudomonas putida (strain ATCC 47054 / DSM 6125 / CFBP 8728 / NCIMB 11950 / KT2440), this protein is DNA ligase.